Here is a 283-residue protein sequence, read N- to C-terminus: ATP phosphoribosyltransferase (283 aa).

The protein belongs to the ATP phosphoribosyltransferase family. Long subfamily. Mg(2+) is required as a cofactor.

It is found in the cytoplasm. The catalysed reaction is 1-(5-phospho-beta-D-ribosyl)-ATP + diphosphate = 5-phospho-alpha-D-ribose 1-diphosphate + ATP. It participates in amino-acid biosynthesis; L-histidine biosynthesis; L-histidine from 5-phospho-alpha-D-ribose 1-diphosphate: step 1/9. Its activity is regulated as follows. Feedback inhibited by histidine. Its function is as follows. Catalyzes the condensation of ATP and 5-phosphoribose 1-diphosphate to form N'-(5'-phosphoribosyl)-ATP (PR-ATP). Has a crucial role in the pathway because the rate of histidine biosynthesis seems to be controlled primarily by regulation of HisG enzymatic activity. The polypeptide is ATP phosphoribosyltransferase (Azobacteroides pseudotrichonymphae genomovar. CFP2).